A 341-amino-acid chain; its full sequence is HTH-type transcriptional repressor PurR (341 aa).

The HTH lacI-type domain maps to 2-56 (ATIKDVAKRAGVSTTTVSHVINKTRFVAEETKAAVRAAIKELHYSPSAVARSLKV). The H-T-H motif DNA-binding region spans 4 to 23 (IKDVAKRAGVSTTTVSHVIN). The DNA-binding element occupies 48–56 (SAVARSLKV). Hypoxanthine contacts are provided by Tyr-73, Arg-190, Thr-192, Phe-221, and Asp-275.

In terms of assembly, homodimer.

The protein operates within purine metabolism; purine nucleotide biosynthesis [regulation]. Functionally, is the main repressor of the genes involved in the de novo synthesis of purine nucleotides, regulating purB, purC, purEK, purF, purHD, purL, purMN and guaBA expression. PurR is allosterically activated to bind its cognate DNA by binding the purine corepressors, hypoxanthine or guanine, thereby effecting transcription repression. This Pectobacterium carotovorum subsp. carotovorum (strain PC1) protein is HTH-type transcriptional repressor PurR.